Reading from the N-terminus, the 354-residue chain is Guanine nucleotide-binding protein G(o) subunit alpha (354 aa).

G2 carries the N-myristoyl glycine lipid modification. The S-palmitoyl cysteine moiety is linked to residue C3. The G-alpha domain maps to 32–354 (KDVKLLLLGA…ANNLRGCGLY (323 aa)). The tract at residues 35–48 (KLLLLGAGESGKST) is G1 motif. GTP-binding residues include E43, K46, S47, T48, S152, L176, R177, T178, and R179. S47 is a Mg(2+) binding site. The tract at residues 174–182 (DILRTRVKT) is G2 motif. An ADP-ribosylarginine; by cholera toxin modification is found at R179. T182 contacts Mg(2+). The G3 motif stretch occupies residues 197–206 (FRLFDVGGQR). A 5-glutamyl histamine modification is found at Q205. A G4 motif region spans residues 266 to 273 (ILFLNKKD). Positions 270, 273, and 325 each coordinate GTP. Residues 324-329 (TCATDT) are G5 motif. A lipid anchor (S-palmitoyl cysteine) is attached at C351. C351 carries the ADP-ribosylcysteine; by pertussis toxin modification.

This sequence belongs to the G-alpha family. G(i/o/t/z) subfamily. In terms of assembly, g proteins are composed of 3 units; alpha, beta and gamma. The alpha chain contains the guanine nucleotide binding site. Forms a complex with GNB1 and GNG3. Interacts with RGS14. Interacts with RGS16. Interacts with RGS19. Interacts (when palmitoylated) with ADGRG3. Histaminylated at Gln-205 residues by TGM2. Post-translationally, palmitoylated at Cys-351, leading to binding to ADGRG3.

The protein localises to the cell membrane. It is found in the membrane. The catalysed reaction is GTP + H2O = GDP + phosphate + H(+). With respect to regulation, the GTPase activity is promoted by GTPAse activators, such as RGS14, RGS16 and RGS19. Its function is as follows. Guanine nucleotide-binding proteins (G proteins) function as transducers downstream of G protein-coupled receptors (GPCRs) in numerous signaling cascades. The alpha chain contains the guanine nucleotide binding site and alternates between an active, GTP-bound state and an inactive, GDP-bound state. Signaling by an activated GPCR promotes GDP release and GTP binding. The alpha subunit has a low GTPase activity that converts bound GTP to GDP, thereby terminating the signal. Both GDP release and GTP hydrolysis are modulated by numerous regulatory proteins. Signaling is mediated via effector proteins, such as adenylate cyclase. Inhibits adenylate cyclase activity, leading to decreased intracellular cAMP levels. This Homo sapiens (Human) protein is Guanine nucleotide-binding protein G(o) subunit alpha (GNAO1).